The following is a 179-amino-acid chain: Large ribosomal subunit protein uL5 (179 aa).

The protein belongs to the universal ribosomal protein uL5 family. Part of the 50S ribosomal subunit; part of the 5S rRNA/L5/L18/L25 subcomplex. Contacts the 5S rRNA and the P site tRNA. Forms a bridge to the 30S subunit in the 70S ribosome.

This is one of the proteins that bind and probably mediate the attachment of the 5S RNA into the large ribosomal subunit, where it forms part of the central protuberance. In the 70S ribosome it contacts protein S13 of the 30S subunit (bridge B1b), connecting the 2 subunits; this bridge is implicated in subunit movement. Contacts the P site tRNA; the 5S rRNA and some of its associated proteins might help stabilize positioning of ribosome-bound tRNAs. The sequence is that of Large ribosomal subunit protein uL5 from Bacillus velezensis (strain DSM 23117 / BGSC 10A6 / LMG 26770 / FZB42) (Bacillus amyloliquefaciens subsp. plantarum).